The primary structure comprises 518 residues: Glutamate--cysteine ligase (518 aa).

This sequence belongs to the glutamate--cysteine ligase type 1 family. Type 1 subfamily.

The enzyme catalyses L-cysteine + L-glutamate + ATP = gamma-L-glutamyl-L-cysteine + ADP + phosphate + H(+). The protein operates within sulfur metabolism; glutathione biosynthesis; glutathione from L-cysteine and L-glutamate: step 1/2. The sequence is that of Glutamate--cysteine ligase from Salmonella gallinarum (strain 287/91 / NCTC 13346).